A 212-amino-acid polypeptide reads, in one-letter code: Thymidylate kinase (212 aa).

ATP is bound at residue 10–17 (GPDGAGKT).

The protein belongs to the thymidylate kinase family.

It catalyses the reaction dTMP + ATP = dTDP + ADP. In terms of biological role, phosphorylation of dTMP to form dTDP in both de novo and salvage pathways of dTTP synthesis. This Lactobacillus delbrueckii subsp. bulgaricus (strain ATCC 11842 / DSM 20081 / BCRC 10696 / JCM 1002 / NBRC 13953 / NCIMB 11778 / NCTC 12712 / WDCM 00102 / Lb 14) protein is Thymidylate kinase.